Consider the following 196-residue polypeptide: MIPVVIEQTSRGERSYDIYSRLLKDRIIMLTGPVEDNMANSVIAQLLFLDAQDSTKDIYLYVNTPGGSVSAGLAIVDTMNFIKADVQTIVMGMAASMGTVIASSGAKGKRFMLPNAEYMIHQPMGGTGGGTQQTDMAIAAEHLLKTRNTLEKILAENSGQSMEKVHADAERDNWMSAHETLEYGFIDEIMANNSLN.

The active-site Nucleophile is the Ser96. Residue His121 is part of the active site.

Belongs to the peptidase S14 family. As to quaternary structure, fourteen ClpP subunits assemble into 2 heptameric rings which stack back to back to give a disk-like structure with a central cavity, resembling the structure of eukaryotic proteasomes.

The protein localises to the cytoplasm. The enzyme catalyses Hydrolysis of proteins to small peptides in the presence of ATP and magnesium. alpha-casein is the usual test substrate. In the absence of ATP, only oligopeptides shorter than five residues are hydrolyzed (such as succinyl-Leu-Tyr-|-NHMec, and Leu-Tyr-Leu-|-Tyr-Trp, in which cleavage of the -Tyr-|-Leu- and -Tyr-|-Trp bonds also occurs).. Its function is as follows. Cleaves peptides in various proteins in a process that requires ATP hydrolysis. Has a chymotrypsin-like activity. Plays a major role in the degradation of misfolded proteins. The chain is ATP-dependent Clp protease proteolytic subunit from Streptococcus pneumoniae (strain P1031).